Consider the following 1393-residue polypeptide: DNA-directed RNA polymerase subunit beta' (1393 aa).

Zn(2+) is bound by residues cysteine 72, cysteine 74, cysteine 87, and cysteine 90. Positions 463, 465, and 467 each coordinate Mg(2+). The Zn(2+) site is built by cysteine 812, cysteine 887, cysteine 894, and cysteine 897.

The protein belongs to the RNA polymerase beta' chain family. As to quaternary structure, the RNAP catalytic core consists of 2 alpha, 1 beta, 1 beta' and 1 omega subunit. When a sigma factor is associated with the core the holoenzyme is formed, which can initiate transcription. It depends on Mg(2+) as a cofactor. The cofactor is Zn(2+).

It carries out the reaction RNA(n) + a ribonucleoside 5'-triphosphate = RNA(n+1) + diphosphate. DNA-dependent RNA polymerase catalyzes the transcription of DNA into RNA using the four ribonucleoside triphosphates as substrates. The sequence is that of DNA-directed RNA polymerase subunit beta' from Chlamydia caviae (strain ATCC VR-813 / DSM 19441 / 03DC25 / GPIC) (Chlamydophila caviae).